The following is a 272-amino-acid chain: MIKVSDVCFSYTNNMDQLVLKNINVVFEKGKYYAILGHNGSGKSTFSKILSGIFKPQKGSIEVDGVLLNKENLTKIRKKIGIIFQNPDNQFVGATVEDDIAFSLENINEDPKKMSQIIANLAAKVQMESYLDREPQFLSGGQKQKVAIASVLALNPEIIIFDEITSMLDPRGKYDVVKILDDLRKDKTKTLISITHNMNEAILADEIIVFANGGIIAQGDPKLILNDKNIIEKAKIDSPFIYKISSALKLVSPTYDENELLEQLWKLKQKTS.

In terms of domain architecture, ABC transporter spans 2-237 (IKVSDVCFSY…KNIIEKAKID (236 aa)). 37-44 (GHNGSGKS) provides a ligand contact to ATP.

It belongs to the ABC transporter superfamily. Energy-coupling factor EcfA family. As to quaternary structure, forms a stable energy-coupling factor (ECF) transporter complex composed of 2 membrane-embedded substrate-binding proteins (S component), 2 ATP-binding proteins (A component) and 2 transmembrane proteins (T component).

Its subcellular location is the cell membrane. In terms of biological role, ATP-binding (A) component of a common energy-coupling factor (ECF) ABC-transporter complex. Unlike classic ABC transporters this ECF transporter provides the energy necessary to transport a number of different substrates. The polypeptide is Energy-coupling factor transporter ATP-binding protein EcfA1 (Mesomycoplasma hyopneumoniae (strain J / ATCC 25934 / NCTC 10110) (Mycoplasma hyopneumoniae)).